The sequence spans 55 residues: Ferredoxin (55 aa).

2 4Fe-4S ferredoxin-type domains span residues Tyr-2–Asp-27 and Ala-28–Gly-55. 8 residues coordinate [4Fe-4S] cluster: Cys-8, Cys-11, Cys-14, Cys-18, Cys-37, Cys-40, Cys-43, and Cys-47.

[4Fe-4S] cluster is required as a cofactor.

Functionally, ferredoxins are iron-sulfur proteins that transfer electrons in a wide variety of metabolic reactions. In Clostridium sp. (strain M-E), this protein is Ferredoxin.